The sequence spans 209 residues: Fibroblast growth factor 21 (209 aa).

The first 28 residues, 1–28 (MDSDETGFEHSGLWVSVLAGLLLGACQA), serve as a signal peptide directing secretion. The disordered stretch occupies residues 143–209 (PLHLPGNKSP…SQGRSPSYAS (67 aa)). Positions 168-186 (PGLPPALPEPPGILAPQPP) are enriched in pro residues.

The protein belongs to the heparin-binding growth factors family. In terms of assembly, interacts (via C-terminus) with KLB; this interaction is direct. Interacts with FGFR4.

The protein localises to the secreted. In terms of biological role, stimulates glucose uptake in differentiated adipocytes via the induction of glucose transporter SLC2A1/GLUT1 expression (but not SLC2A4/GLUT4 expression). Activity requires the presence of KLB. Regulates systemic glucose homeostasis and insulin sensitivity. In Homo sapiens (Human), this protein is Fibroblast growth factor 21 (FGF21).